We begin with the raw amino-acid sequence, 376 residues long: Protein RecA (376 aa).

Residue 65-72 (GPESSGKT) participates in ATP binding. Positions 316-376 (EHDEIFTSVR…GDDLSDDDIY (61 aa)) are disordered. Over residues 331-350 (GEKKDSDEDPGDNKKSKDSA) the composition is skewed to basic and acidic residues. Acidic residues predominate over residues 366-376 (PGDDLSDDDIY).

This sequence belongs to the RecA family.

Its subcellular location is the cytoplasm. Can catalyze the hydrolysis of ATP in the presence of single-stranded DNA, the ATP-dependent uptake of single-stranded DNA by duplex DNA, and the ATP-dependent hybridization of homologous single-stranded DNAs. It interacts with LexA causing its activation and leading to its autocatalytic cleavage. The chain is Protein RecA from Oenococcus oeni (strain ATCC BAA-331 / PSU-1).